The chain runs to 674 residues: Sodium/myo-inositol cotransporter 2 (674 aa).

At 1 to 25 (MESSASSPPLTQSDPLEAFPRRTLE) the chain is on the extracellular side. Residues 26-46 (AGDIAVLVLYFLFVLAVGLWS) traverse the membrane as a helical segment. The Cytoplasmic portion of the chain corresponds to 47-56 (TVKTKRDTVK). The chain crosses the membrane as a helical span at residues 57–77 (GYFLAGGNMLWWPVGASLFAS). The Extracellular segment spans residues 78–102 (NVGSGHFVGLAGSGAAAGLSVTAYE). Residues 103–123 (LNGLFFVLMLSWIFLPIYITG) form a helical membrane-spanning segment. The Cytoplasmic portion of the chain corresponds to 124–140 (QVTTMPEYLRKRFGGNR). The chain crosses the membrane as a helical span at residues 141 to 161 (IPIILAVLYLFIYIFTKISVD). Over 162–180 (MYAGAIFIQQSLHVNLYLA) the chain is Extracellular. Residues 181-201 (IVGLLAVTALYTIAGGLAAVI) traverse the membrane as a helical segment. Residues 202-208 (YTDALQT) are Cytoplasmic-facing. A helical transmembrane segment spans residues 209–229 (LIMLIGALILMGYSFAAVGGL). At 230–272 (EGLEEKYFLAMASNRSGNSSCGLPREDAFHIFRDPVTSDLPWP) the chain is on the extracellular side. Residues 273-293 (GILFGMSIPSLWYWCTDQVIV) form a helical membrane-spanning segment. Residues 294 to 308 (QRTLAAKNLSHAKGG) lie on the Cytoplasmic side of the membrane. A helical membrane pass occupies residues 309–329 (SLMAAYLKVLPLFIMVFPGMV). The Extracellular portion of the chain corresponds to 330 to 374 (SRVLFPDEVACADPEICRKVCSNPAGCSDIAYPKLVLELLPTGLR). The chain crosses the membrane as a helical span at residues 375 to 397 (GLMMAVMVAALTSSLTSIFNSAS). Topologically, residues 398–418 (TIFTMDLWNHLRPRASEKELM) are cytoplasmic. Residues 419–439 (IVGRVFVLLLVLVSILWIPVV) traverse the membrane as a helical segment. Over 440-446 (QASQGGQ) the chain is Extracellular. The chain crosses the membrane as a helical span at residues 447–467 (LFIYIQSISSYLQPPVAVVFI). Residues 468–479 (MGCFWKRANEKG) are Cytoplasmic-facing. The chain crosses the membrane as a helical span at residues 480 to 500 (AFFGLVLGLLLGLVRLILDFI). Over 501-521 (YVQPRCDQLDERPAVVKDVHY) the chain is Extracellular. A helical transmembrane segment spans residues 522–542 (LYFSMILSSVTLITVCAVSWF). Topologically, residues 543–653 (TEPPSKEMVS…SLEENPLVKT (111 aa)) are cytoplasmic. The disordered stretch occupies residues 567–589 (EQVPSATPPPLTLSQNGTPEASG). The segment covering 578-589 (TLSQNGTPEASG) has biased composition (polar residues). The helical transmembrane segment at 654 to 674 (LLDLNLIICISCAIFLWGYFA) threads the bilayer.

Belongs to the sodium:solute symporter (SSF) (TC 2.A.21) family.

It is found in the membrane. It localises to the apical cell membrane. The catalysed reaction is myo-inositol(out) + 2 Na(+)(out) = myo-inositol(in) + 2 Na(+)(in). It catalyses the reaction 1D-chiro-inositol(out) + 2 Na(+)(out) = 1D-chiro-inositol(in) + 2 Na(+)(in). It carries out the reaction D-glucose(out) + 2 Na(+)(out) = D-glucose(in) + 2 Na(+)(in). The enzyme catalyses D-xylose(out) + 2 Na(+)(out) = D-xylose(in) + 2 Na(+)(in). With respect to regulation, MI transport activity inhibited by D-chiro-inositol (DCI), phlorizin (Pz) and sodium (Na(+)). Insulin increases D-chiro-inositol uptake. In terms of biological role, involved in the sodium-dependent cotransport of myo-inositol (MI) with a Na(+):MI stoichiometry of 2:1. Exclusively responsible for apical MI transport and absorption in intestine. Can also transport D-chiro-inositol (DCI) but not L-fucose. Exhibits stereospecific cotransport of both D-glucose and D-xylose. May induce apoptosis through the TNF-alpha, PDCD1 pathway. May play a role in the regulation of MI concentration in serum, involving reabsorption in at least the proximal tubule of the kidney. This Bos taurus (Bovine) protein is Sodium/myo-inositol cotransporter 2.